The following is a 442-amino-acid chain: D-serine dehydratase 1 (442 aa).

Lys-118 bears the N6-(pyridoxal phosphate)lysine mark.

This sequence belongs to the serine/threonine dehydratase family. DsdA subfamily. In terms of assembly, monomer. Pyridoxal 5'-phosphate serves as cofactor.

It carries out the reaction D-serine = pyruvate + NH4(+). The chain is D-serine dehydratase 1 from Escherichia coli O6:K15:H31 (strain 536 / UPEC).